The chain runs to 296 residues: tRNA dimethylallyltransferase (296 aa).

Position 11 to 18 (11 to 18 (GPTAVGKT)) interacts with ATP. 13-18 (TAVGKT) provides a ligand contact to substrate. The interval 36–39 (DSQQ) is interaction with substrate tRNA.

This sequence belongs to the IPP transferase family. As to quaternary structure, monomer. Requires Mg(2+) as cofactor.

It carries out the reaction adenosine(37) in tRNA + dimethylallyl diphosphate = N(6)-dimethylallyladenosine(37) in tRNA + diphosphate. Its function is as follows. Catalyzes the transfer of a dimethylallyl group onto the adenine at position 37 in tRNAs that read codons beginning with uridine, leading to the formation of N6-(dimethylallyl)adenosine (i(6)A). The sequence is that of tRNA dimethylallyltransferase from Streptococcus equi subsp. zooepidemicus (strain H70).